Here is a 544-residue protein sequence, read N- to C-terminus: Thermosome subunit (544 aa).

This sequence belongs to the TCP-1 chaperonin family. In terms of assembly, forms an oligomeric complex of eight-membered rings.

Functionally, molecular chaperone; binds unfolded polypeptides in vitro, and has a weak ATPase activity. The sequence is that of Thermosome subunit (ths) from Methanothermococcus thermolithotrophicus (Methanococcus thermolithotrophicus).